A 540-amino-acid chain; its full sequence is Telomerase Cajal body protein 1 (540 aa).

Over residues 1 to 10 (MKTPEAPPLA) the composition is skewed to pro residues. The interval 1-126 (MKTPEAPPLA…GEDVEGVSEE (126 aa)) is disordered. Phosphoserine occurs at positions 26, 30, 54, 64, 85, and 90. Residues 116-126 (PGEDVEGVSEE) are compositionally biased toward acidic residues. WD repeat units lie at residues 158-197 (QPENFLKGCKWAPDGSCILTNSADNILRIYNLPPELYNEG), 213-258 (EGDT…LRAS), 263-304 (NHLD…RDCE), 314-355 (GQSG…ALLG), 356-396 (GHQG…HPLW), and 402-441 (VTTNQRIYFDLDPTGQFLVSGSTSGAVSVWDTGGAGLESK). T480 carries the post-translational modification Phosphothreonine. Residue S482 is modified to Phosphoserine. Residues 520–540 (SDAHQEEMGQGRTEGGGGEFT) form a disordered region. Over residues 531-540 (RTEGGGGEFT) the composition is skewed to gly residues.

Belongs to the TCAB1 family. Component of the telomerase holoenzyme complex composed of one molecule of TERT, one molecule of WRAP53/TCAB1, two molecules of H/ACA ribonucleoprotein complex subunits DKC1, NOP10, NHP2 and GAR1, and a telomerase RNA template component (TERC). The telomerase holoenzyme complex is associated with TEP1, SMG6/EST1A and POT1. Interacts with the chaperonin-containing T-complex (TRiC) complex; which mediates the folding of WRAP53/TCAB1. Interacts with COIL. Interacts with SMN1. Interacts with RNF8. Interacts with histone H2AX. Post-translationally, phosphorylated at Ser-64 by ATM in response to DNA damage, promoting its interaction with histone H2AX and localization to sites of DNA double-strand breaks.

The protein resides in the nucleus. It localises to the cajal body. Its subcellular location is the chromosome. It is found in the telomere. Its function is as follows. RNA chaperone that plays a key role in telomere maintenance and RNA localization to Cajal bodies. Specifically recognizes and binds the Cajal body box (CAB box) present in both small Cajal body RNAs (scaRNAs) and telomerase RNA template component (TERC). Essential component of the telomerase holoenzyme complex, a ribonucleoprotein complex essential for the replication of chromosome termini that elongates telomeres in most eukaryotes. In the telomerase holoenzyme complex, required to stimulate the catalytic activity of the complex. Acts by specifically binding the CAB box of the TERC RNA and controlling the folding of the CR4/CR5 region of the TERC RNA, a critical step for telomerase activity. In addition, also controls telomerase holoenzyme complex localization to Cajal body. During S phase, required for delivery of TERC to telomeres during S phase and for telomerase activity. In addition to its role in telomere maintenance, also required for Cajal body formation, probably by mediating localization of scaRNAs to Cajal bodies. Also plays a role in DNA repair: phosphorylated by ATM in response to DNA damage and relocalizes to sites of DNA double-strand breaks to promote the repair of DNA double-strand breaks. Acts by recruiting the ubiquitin ligase RNF8 to DNA breaks and promote both homologous recombination (HR) and non-homologous end joining (NHEJ). In Bos taurus (Bovine), this protein is Telomerase Cajal body protein 1.